A 272-amino-acid chain; its full sequence is Putative phosphoenolpyruvate synthase regulatory protein (272 aa).

152-159 (GVSRCGKT) contacts ADP.

The protein belongs to the pyruvate, phosphate/water dikinase regulatory protein family. PSRP subfamily.

The catalysed reaction is [pyruvate, water dikinase] + ADP = [pyruvate, water dikinase]-phosphate + AMP + H(+). The enzyme catalyses [pyruvate, water dikinase]-phosphate + phosphate + H(+) = [pyruvate, water dikinase] + diphosphate. Its function is as follows. Bifunctional serine/threonine kinase and phosphorylase involved in the regulation of the phosphoenolpyruvate synthase (PEPS) by catalyzing its phosphorylation/dephosphorylation. The sequence is that of Putative phosphoenolpyruvate synthase regulatory protein from Pseudomonas fluorescens (strain SBW25).